The following is a 105-amino-acid chain: Phosphoribosyl-ATP pyrophosphatase (105 aa).

The protein belongs to the PRA-PH family.

Its subcellular location is the cytoplasm. The catalysed reaction is 1-(5-phospho-beta-D-ribosyl)-ATP + H2O = 1-(5-phospho-beta-D-ribosyl)-5'-AMP + diphosphate + H(+). Its pathway is amino-acid biosynthesis; L-histidine biosynthesis; L-histidine from 5-phospho-alpha-D-ribose 1-diphosphate: step 2/9. The sequence is that of Phosphoribosyl-ATP pyrophosphatase from Ruegeria sp. (strain TM1040) (Silicibacter sp.).